Reading from the N-terminus, the 166-residue chain is NAD(P)H-quinone oxidoreductase subunit I, chloroplastic (166 aa).

4Fe-4S ferredoxin-type domains follow at residues 55–84 (GRIH…VDWK) and 95–124 (LNYS…MTEE). Cys-64, Cys-67, Cys-70, Cys-74, Cys-104, Cys-107, Cys-110, and Cys-114 together coordinate [4Fe-4S] cluster.

Belongs to the complex I 23 kDa subunit family. NDH is composed of at least 16 different subunits, 5 of which are encoded in the nucleus. The cofactor is [4Fe-4S] cluster.

Its subcellular location is the plastid. It is found in the chloroplast thylakoid membrane. It carries out the reaction a plastoquinone + NADH + (n+1) H(+)(in) = a plastoquinol + NAD(+) + n H(+)(out). The enzyme catalyses a plastoquinone + NADPH + (n+1) H(+)(in) = a plastoquinol + NADP(+) + n H(+)(out). Functionally, NDH shuttles electrons from NAD(P)H:plastoquinone, via FMN and iron-sulfur (Fe-S) centers, to quinones in the photosynthetic chain and possibly in a chloroplast respiratory chain. The immediate electron acceptor for the enzyme in this species is believed to be plastoquinone. Couples the redox reaction to proton translocation, and thus conserves the redox energy in a proton gradient. This is NAD(P)H-quinone oxidoreductase subunit I, chloroplastic from Calea megacephala.